A 925-amino-acid polypeptide reads, in one-letter code: Bifunctional imidazolonepropionase/histidine ammonia-lyase (925 aa).

The imidazolonepropionase stretch occupies residues 1 to 414 (MTKNSSTVFT…IKPHVRMEPF (414 aa)). Residues histidine 73 and histidine 75 each contribute to the Fe(3+) site. Histidine 73 and histidine 75 together coordinate Zn(2+). 3 residues coordinate 4-imidazolone-5-propanoate: arginine 82, tyrosine 145, and histidine 178. Tyrosine 145 contributes to the N-formimidoyl-L-glutamate binding site. Position 243 (histidine 243) interacts with Fe(3+). Histidine 243 provides a ligand contact to Zn(2+). Glutamine 246 lines the 4-imidazolone-5-propanoate pocket. Aspartate 318 lines the Fe(3+) pocket. Aspartate 318 provides a ligand contact to Zn(2+). Residues asparagine 320 and glycine 322 each contribute to the N-formimidoyl-L-glutamate site. Threonine 323 serves as a coordination point for 4-imidazolone-5-propanoate. The segment at 415 to 925 (MTIILKPGSV…SAGILPDLEA (511 aa)) is histidine ammonia-lyase. A cross-link (5-imidazolinone (Ala-Gly)) is located at residues 556–558 (ASG). The residue at position 557 (serine 557) is a 2,3-didehydroalanine (Ser).

The protein in the N-terminal section; belongs to the metallo-dependent hydrolases superfamily. HutI family. This sequence in the C-terminal section; belongs to the PAL/histidase family. Requires Zn(2+) as cofactor. It depends on Fe(3+) as a cofactor. In terms of processing, contains an active site 4-methylidene-imidazol-5-one (MIO), which is formed autocatalytically by cyclization and dehydration of residues Ala-Ser-Gly.

Its subcellular location is the cytoplasm. It catalyses the reaction 4-imidazolone-5-propanoate + H2O = N-formimidoyl-L-glutamate. The catalysed reaction is L-histidine = trans-urocanate + NH4(+). It functions in the pathway amino-acid degradation; L-histidine degradation into L-glutamate; N-formimidoyl-L-glutamate from L-histidine: step 1/3. Its pathway is amino-acid degradation; L-histidine degradation into L-glutamate; N-formimidoyl-L-glutamate from L-histidine: step 3/3. In terms of biological role, catalyzes the hydrolytic cleavage of the carbon-nitrogen bond in imidazolone-5-propanoate to yield N-formimidoyl-L-glutamate. It is the third step in the universal histidine degradation pathway. The polypeptide is Bifunctional imidazolonepropionase/histidine ammonia-lyase (hutIH) (Brucella melitensis biotype 1 (strain ATCC 23456 / CCUG 17765 / NCTC 10094 / 16M)).